A 280-amino-acid polypeptide reads, in one-letter code: Octanoyltransferase LIP2p2, chloroplastic (280 aa).

The transit peptide at 1–34 (MVFSVATSSVTNPKLHHHHHLSDFNRNRVSTSLK) directs the protein to the chloroplast. The 190-residue stretch at 81 to 270 (QECSDSLIIL…EFSEVFQLQM (190 aa)) folds into the BPL/LPL catalytic domain. Substrate contacts are provided by residues 123–130 (RGGEVTYH), 191–193 (AIG), and 204–206 (GLA). The active-site Acyl-thioester intermediate is cysteine 222.

This sequence belongs to the LipB family. Expressed in roots, leaves, cauline leaves, stems, siliques and flowers.

Its subcellular location is the plastid. It is found in the chloroplast. The catalysed reaction is octanoyl-[ACP] + L-lysyl-[protein] = N(6)-octanoyl-L-lysyl-[protein] + holo-[ACP] + H(+). The protein operates within protein modification; protein lipoylation via endogenous pathway; protein N(6)-(lipoyl)lysine from octanoyl-[acyl-carrier-protein]: step 1/2. In terms of biological role, catalyzes the transfer of endogenously produced octanoic acid from octanoyl-acyl-carrier-protein onto the lipoyl domains of lipoate-dependent enzymes. Lipoyl-ACP can also act as a substrate although octanoyl-ACP is likely to be the physiological substrate. Together with LIP1P is essential for de novo plastidial protein lipoylation during seed development. Acts redundantly with LIP2P. This is Octanoyltransferase LIP2p2, chloroplastic from Arabidopsis thaliana (Mouse-ear cress).